The following is a 556-amino-acid chain: Serine/threonine-protein kinase PksC (556 aa).

In terms of domain architecture, Protein kinase spans 20-287 (YQLRDLLGEG…SAEAMRDECL (268 aa)). ATP-binding positions include 26–34 (LGEGGMASV) and lysine 49. Aspartate 151 functions as the Proton acceptor in the catalytic mechanism. Disordered stretches follow at residues 300 to 403 (IVPG…PGGK) and 435 to 485 (EDPE…DPDK). Residues 336-348 (QPTPSPGPNPYGT) show a composition bias toward pro residues. 2 stretches are compositionally biased toward low complexity: residues 360 to 381 (YPQQ…QAAA) and 445 to 458 (STAS…KAAG). The span at 461–475 (GPDKEKTIEKDKCTE) shows a compositional bias: basic and acidic residues. Residues 482 to 550 (DPDKIQVPDF…MPEIQLKVST (69 aa)) enclose the PASTA domain.

Belongs to the protein kinase superfamily. Ser/Thr protein kinase family.

The catalysed reaction is L-seryl-[protein] + ATP = O-phospho-L-seryl-[protein] + ADP + H(+). The enzyme catalyses L-threonyl-[protein] + ATP = O-phospho-L-threonyl-[protein] + ADP + H(+). This chain is Serine/threonine-protein kinase PksC (pksC), found in Streptomyces coelicolor (strain ATCC BAA-471 / A3(2) / M145).